A 273-amino-acid polypeptide reads, in one-letter code: 3-methyl-2-oxobutanoate hydroxymethyltransferase (273 aa).

Residues D49 and D88 each coordinate Mg(2+). 3-methyl-2-oxobutanoate contacts are provided by residues 49–50 (DS), D88, and K118. Position 120 (E120) interacts with Mg(2+). E187 serves as the catalytic Proton acceptor.

This sequence belongs to the PanB family. Homodecamer; pentamer of dimers. Mg(2+) is required as a cofactor.

It localises to the cytoplasm. It catalyses the reaction 3-methyl-2-oxobutanoate + (6R)-5,10-methylene-5,6,7,8-tetrahydrofolate + H2O = 2-dehydropantoate + (6S)-5,6,7,8-tetrahydrofolate. It participates in cofactor biosynthesis; (R)-pantothenate biosynthesis; (R)-pantoate from 3-methyl-2-oxobutanoate: step 1/2. Its function is as follows. Catalyzes the reversible reaction in which hydroxymethyl group from 5,10-methylenetetrahydrofolate is transferred onto alpha-ketoisovalerate to form ketopantoate. The sequence is that of 3-methyl-2-oxobutanoate hydroxymethyltransferase from Sinorhizobium medicae (strain WSM419) (Ensifer medicae).